A 461-amino-acid polypeptide reads, in one-letter code: Cysteine--tRNA ligase (461 aa).

Cysteine 28 serves as a coordination point for Zn(2+). A 'HIGH' region motif is present at residues 30–40 (ITVYDLCHIGH). 3 residues coordinate Zn(2+): cysteine 209, histidine 234, and glutamate 238. Residues 266–270 (KMSKS) carry the 'KMSKS' region motif. An ATP-binding site is contributed by lysine 269.

It belongs to the class-I aminoacyl-tRNA synthetase family. Monomer. It depends on Zn(2+) as a cofactor.

Its subcellular location is the cytoplasm. The catalysed reaction is tRNA(Cys) + L-cysteine + ATP = L-cysteinyl-tRNA(Cys) + AMP + diphosphate. The chain is Cysteine--tRNA ligase from Escherichia coli (strain SMS-3-5 / SECEC).